Reading from the N-terminus, the 460-residue chain is UDP-N-acetylmuramoylalanine--D-glutamate ligase (460 aa).

Residue 120–126 (GSNGKTT) coordinates ATP.

It belongs to the MurCDEF family.

The protein localises to the cytoplasm. The enzyme catalyses UDP-N-acetyl-alpha-D-muramoyl-L-alanine + D-glutamate + ATP = UDP-N-acetyl-alpha-D-muramoyl-L-alanyl-D-glutamate + ADP + phosphate + H(+). It functions in the pathway cell wall biogenesis; peptidoglycan biosynthesis. Cell wall formation. Catalyzes the addition of glutamate to the nucleotide precursor UDP-N-acetylmuramoyl-L-alanine (UMA). The sequence is that of UDP-N-acetylmuramoylalanine--D-glutamate ligase from Lactobacillus johnsonii (strain CNCM I-12250 / La1 / NCC 533).